The primary structure comprises 415 residues: uncharacterized protein (415 aa).

2 disordered regions span residues lysine 329 to serine 351 and lysine 388 to leucine 415. Positions leucine 338–threonine 348 are enriched in acidic residues. The span at lysine 399–asparagine 409 shows a compositional bias: basic residues.

This is an uncharacterized protein from Acanthamoeba polyphaga mimivirus (APMV).